A 137-amino-acid chain; its full sequence is Small ribosomal subunit protein uS11 (137 aa).

Residues 1 to 25 (MADRRRGAARGGAARPRRRERKNIP) form a disordered region. Over residues 15–25 (RPRRRERKNIP) the composition is skewed to basic residues.

The protein belongs to the universal ribosomal protein uS11 family. Part of the 30S ribosomal subunit. Interacts with proteins S7 and S18. Binds to IF-3.

Its function is as follows. Located on the platform of the 30S subunit, it bridges several disparate RNA helices of the 16S rRNA. Forms part of the Shine-Dalgarno cleft in the 70S ribosome. This is Small ribosomal subunit protein uS11 from Thermomicrobium roseum (strain ATCC 27502 / DSM 5159 / P-2).